A 164-amino-acid chain; its full sequence is Lipoprotein signal peptidase (164 aa).

The next 4 membrane-spanning stretches (helical) occupy residues 11 to 31 (YWVL…AVLS), 41 to 61 (VIPS…FSFL), 64 to 84 (QGGW…AYLV), and 92 to 112 (FATL…GNVI). Catalysis depends on residues Asp122 and Asp140. The chain crosses the membrane as a helical span at residues 132 to 152 (FYPAFNIADSFICVGAVLAVL).

This sequence belongs to the peptidase A8 family.

The protein resides in the cell inner membrane. The catalysed reaction is Release of signal peptides from bacterial membrane prolipoproteins. Hydrolyzes -Xaa-Yaa-Zaa-|-(S,diacylglyceryl)Cys-, in which Xaa is hydrophobic (preferably Leu), and Yaa (Ala or Ser) and Zaa (Gly or Ala) have small, neutral side chains.. It participates in protein modification; lipoprotein biosynthesis (signal peptide cleavage). Its function is as follows. This protein specifically catalyzes the removal of signal peptides from prolipoproteins. The protein is Lipoprotein signal peptidase of Neisseria meningitidis serogroup C (strain 053442).